A 213-amino-acid polypeptide reads, in one-letter code: Orotate phosphoribosyltransferase (213 aa).

Lys-26 is a 5-phospho-alpha-D-ribose 1-diphosphate binding site. 34–35 contributes to the orotate binding site; the sequence is FF. Residues 72 to 73, Arg-99, Lys-100, Lys-103, His-105, and 124 to 132 contribute to the 5-phospho-alpha-D-ribose 1-diphosphate site; these read YK and DDVITAGTA. Orotate contacts are provided by Thr-128 and Arg-156.

It belongs to the purine/pyrimidine phosphoribosyltransferase family. PyrE subfamily. As to quaternary structure, homodimer. Mg(2+) serves as cofactor.

It catalyses the reaction orotidine 5'-phosphate + diphosphate = orotate + 5-phospho-alpha-D-ribose 1-diphosphate. It participates in pyrimidine metabolism; UMP biosynthesis via de novo pathway; UMP from orotate: step 1/2. In terms of biological role, catalyzes the transfer of a ribosyl phosphate group from 5-phosphoribose 1-diphosphate to orotate, leading to the formation of orotidine monophosphate (OMP). In Salmonella arizonae (strain ATCC BAA-731 / CDC346-86 / RSK2980), this protein is Orotate phosphoribosyltransferase.